Reading from the N-terminus, the 87-residue chain is Small ribosomal subunit protein uS17 (87 aa).

Belongs to the universal ribosomal protein uS17 family. In terms of assembly, part of the 30S ribosomal subunit.

Its function is as follows. One of the primary rRNA binding proteins, it binds specifically to the 5'-end of 16S ribosomal RNA. The chain is Small ribosomal subunit protein uS17 from Staphylococcus aureus (strain JH1).